A 251-amino-acid chain; its full sequence is 5'-nucleotidase SurE (251 aa).

Positions 8, 9, 39, and 90 each coordinate a divalent metal cation.

It belongs to the SurE nucleotidase family. A divalent metal cation is required as a cofactor.

The protein resides in the cytoplasm. It carries out the reaction a ribonucleoside 5'-phosphate + H2O = a ribonucleoside + phosphate. In terms of biological role, nucleotidase that shows phosphatase activity on nucleoside 5'-monophosphates. The chain is 5'-nucleotidase SurE from Colwellia psychrerythraea (strain 34H / ATCC BAA-681) (Vibrio psychroerythus).